Consider the following 556-residue polypeptide: 2-isopropylmalate synthase (556 aa).

A Pyruvate carboxyltransferase domain is found at 33–307 (PIWLSSDLRD…DPQLDFSDID (275 aa)). 4 residues coordinate Mg(2+): Asp-42, His-246, His-248, and Asn-282. Residues 439–556 (ATAPYTLKGH…ALHQAQEAAA (118 aa)) form a regulatory domain region.

Belongs to the alpha-IPM synthase/homocitrate synthase family. LeuA type 2 subfamily. As to quaternary structure, homodimer. The cofactor is Mg(2+).

The protein localises to the cytoplasm. The catalysed reaction is 3-methyl-2-oxobutanoate + acetyl-CoA + H2O = (2S)-2-isopropylmalate + CoA + H(+). It participates in amino-acid biosynthesis; L-leucine biosynthesis; L-leucine from 3-methyl-2-oxobutanoate: step 1/4. Functionally, catalyzes the condensation of the acetyl group of acetyl-CoA with 3-methyl-2-oxobutanoate (2-ketoisovalerate) to form 3-carboxy-3-hydroxy-4-methylpentanoate (2-isopropylmalate). In Stutzerimonas stutzeri (strain A1501) (Pseudomonas stutzeri), this protein is 2-isopropylmalate synthase.